Reading from the N-terminus, the 113-residue chain is MSQSRLDDLFAYVEERCLWQFFSRTWDREENIEGVLNQVCRLLTGQEPLRGTPQERLFYADALAMANDVRERFPWASQVNKEEIAFLIDGLKSRLVDVTITRSTNRELNHHLY.

As to quaternary structure, hexamer of two alpha, two beta, and two delta chains. Iron-sulfur cluster serves as cofactor. The cofactor is vanadium cation.

The catalysed reaction is N2 + 8 reduced [2Fe-2S]-[ferredoxin] + 16 ATP + 16 H2O = H2 + 8 oxidized [2Fe-2S]-[ferredoxin] + 2 NH4(+) + 16 ADP + 16 phosphate + 6 H(+). Functionally, the key enzymatic reactions in nitrogen fixation are catalyzed by the nitrogenase complex, which has 2 components: the iron protein (component 2) and a component 1 which is either a molybdenum-iron protein, a vanadium-iron, or an iron-iron protein. This is Nitrogenase vanadium-iron protein delta chain (vnfG) from Azotobacter salinestris.